The following is a 614-amino-acid chain: Probable LRR receptor-like serine/threonine-protein kinase At5g63710 (614 aa).

An N-terminal signal peptide occupies residues 1–50 (MAHSGNGESFHDPLRGFIQRNCFRWNNQKLILQCFMALAFVGITSSTTQP). Residues 51–224 (DIEGGALLQL…VTSSKKKLRD (174 aa)) lie on the Extracellular side of the membrane. Asparagine 65, asparagine 125, asparagine 146, and asparagine 175 each carry an N-linked (GlcNAc...) asparagine glycan. LRR repeat units lie at residues 115–139 (LKFL…LGNM), 141–163 (NLQT…WSQL), and 164–187 (SNLK…FFSI). A helical membrane pass occupies residues 225–245 (ITLTASCVASIILFLGAMVMY). The Cytoplasmic portion of the chain corresponds to 246-613 (HHHRVRRTKY…DQESIRLSTA (368 aa)). At threonine 286 the chain carries Phosphothreonine. Positions 289 to 573 (FNESNLIGQG…GTGGLAEKWT (285 aa)) constitute a Protein kinase domain. 295–303 (IGQGGFGKV) serves as a coordination point for ATP. At threonine 312 the chain carries Phosphothreonine. Lysine 317 contributes to the ATP binding site. The residue at position 370 (serine 370) is a Phosphoserine. At threonine 389 the chain carries Phosphothreonine. Aspartate 416 acts as the Proton acceptor in catalysis. Phosphothreonine occurs at positions 449, 450, and 455. A Phosphotyrosine modification is found at tyrosine 463. The residue at position 466 (threonine 466) is a Phosphothreonine. The residue at position 470 (serine 470) is a Phosphoserine. Threonine 545 bears the Phosphothreonine mark.

It belongs to the protein kinase superfamily. Ser/Thr protein kinase family.

The protein localises to the cell membrane. It carries out the reaction L-seryl-[protein] + ATP = O-phospho-L-seryl-[protein] + ADP + H(+). It catalyses the reaction L-threonyl-[protein] + ATP = O-phospho-L-threonyl-[protein] + ADP + H(+). The sequence is that of Probable LRR receptor-like serine/threonine-protein kinase At5g63710 from Arabidopsis thaliana (Mouse-ear cress).